Consider the following 402-residue polypeptide: Lipid-A-disaccharide synthase (402 aa).

Belongs to the LpxB family.

The catalysed reaction is a lipid X + a UDP-2-N,3-O-bis[(3R)-3-hydroxyacyl]-alpha-D-glucosamine = a lipid A disaccharide + UDP + H(+). It functions in the pathway bacterial outer membrane biogenesis; LPS lipid A biosynthesis. Condensation of UDP-2,3-diacylglucosamine and 2,3-diacylglucosamine-1-phosphate to form lipid A disaccharide, a precursor of lipid A, a phosphorylated glycolipid that anchors the lipopolysaccharide to the outer membrane of the cell. In Cupriavidus pinatubonensis (strain JMP 134 / LMG 1197) (Cupriavidus necator (strain JMP 134)), this protein is Lipid-A-disaccharide synthase.